The following is a 179-amino-acid chain: Adenylyl-sulfate kinase (179 aa).

An ATP-binding site is contributed by 13-20 (GLSGAGKS). Catalysis depends on Ser87, which acts as the Phosphoserine intermediate.

This sequence belongs to the APS kinase family.

It catalyses the reaction adenosine 5'-phosphosulfate + ATP = 3'-phosphoadenylyl sulfate + ADP + H(+). Its pathway is sulfur metabolism; hydrogen sulfide biosynthesis; sulfite from sulfate: step 2/3. Its function is as follows. Catalyzes the synthesis of activated sulfate. The polypeptide is Adenylyl-sulfate kinase (Paraburkholderia xenovorans (strain LB400)).